The sequence spans 316 residues: MSNKLEQLRKLTTVVADTGEIDAIKKYQPEDATTNPSLILKAAQIEEYAPLIDASIEYAKAQSNDKAQQVQDTCDMLAVNIGKEILKTIPGRISTEVDARLSYDTEGSVAKARQLVKMYNDAGITNDRILIKLASTWEGIRAAEILEKEGINCNLTLLFSFAQARACAEAGVFLISPFVGRIMDWYKAKEGRDFEASEDPGVISVTDIYNYYKDYGYNTVVMGASFRNIGEILELAGCDRLTIAPALLAELEAAEGEVVEKLVDSKGSKERPAPMSHAEFLWEHNLDAMAVEKVAEGIRNFAVDQGKLEDMIAAKL.

Lysine 132 serves as the catalytic Schiff-base intermediate with substrate.

It belongs to the transaldolase family. Type 1 subfamily. As to quaternary structure, homodimer.

Its subcellular location is the cytoplasm. The enzyme catalyses D-sedoheptulose 7-phosphate + D-glyceraldehyde 3-phosphate = D-erythrose 4-phosphate + beta-D-fructose 6-phosphate. It functions in the pathway carbohydrate degradation; pentose phosphate pathway; D-glyceraldehyde 3-phosphate and beta-D-fructose 6-phosphate from D-ribose 5-phosphate and D-xylulose 5-phosphate (non-oxidative stage): step 2/3. Its function is as follows. Transaldolase is important for the balance of metabolites in the pentose-phosphate pathway. In Vibrio campbellii (strain ATCC BAA-1116), this protein is Transaldolase.